The primary structure comprises 245 residues: PF03932 family protein CutC (245 aa).

It belongs to the CutC family.

The protein resides in the cytoplasm. This chain is PF03932 family protein CutC, found in Photobacterium profundum (strain SS9).